A 156-amino-acid chain; its full sequence is ATP synthase subunit b (156 aa).

A helical transmembrane segment spans residues 7-27 (LFVQAIVFLILVLFTMKFVWP).

Belongs to the ATPase B chain family. As to quaternary structure, F-type ATPases have 2 components, F(1) - the catalytic core - and F(0) - the membrane proton channel. F(1) has five subunits: alpha(3), beta(3), gamma(1), delta(1), epsilon(1). F(0) has three main subunits: a(1), b(2) and c(10-14). The alpha and beta chains form an alternating ring which encloses part of the gamma chain. F(1) is attached to F(0) by a central stalk formed by the gamma and epsilon chains, while a peripheral stalk is formed by the delta and b chains.

Its subcellular location is the cell inner membrane. F(1)F(0) ATP synthase produces ATP from ADP in the presence of a proton or sodium gradient. F-type ATPases consist of two structural domains, F(1) containing the extramembraneous catalytic core and F(0) containing the membrane proton channel, linked together by a central stalk and a peripheral stalk. During catalysis, ATP synthesis in the catalytic domain of F(1) is coupled via a rotary mechanism of the central stalk subunits to proton translocation. In terms of biological role, component of the F(0) channel, it forms part of the peripheral stalk, linking F(1) to F(0). In Paracidovorax citrulli (strain AAC00-1) (Acidovorax citrulli), this protein is ATP synthase subunit b.